We begin with the raw amino-acid sequence, 472 residues long: Endoplasmic reticulum oxidoreductin-2 (472 aa).

Residues 1–37 (MAETDVGSVKGKEKGSGKRWILLIGAIAAVLLAVVVA) form the signal peptide. Asn-44 carries an N-linked (GlcNAc...) asparagine glycan. Disulfide bonds link Cys-55-Cys-74, Cys-57-Cys-72, Cys-111-Cys-371, Cys-120-Cys-125, Cys-221-Cys-230, and Cys-374-Cys-377. The FAD site is built by Arg-200, Thr-202, and Trp-213. Residues Ser-241 and His-244 each contribute to the FAD site. Asn-267 carries N-linked (GlcNAc...) asparagine glycosylation. FAD contacts are provided by Arg-274 and Arg-281. Asn-364 carries an N-linked (GlcNAc...) asparagine glycan.

The protein belongs to the EROs family. In terms of assembly, may function both as a monomer and a homodimer. Requires FAD as cofactor. In terms of processing, N-glycosylated.

It localises to the endoplasmic reticulum membrane. In terms of biological role, essential oxidoreductase that oxidizes proteins in the endoplasmic reticulum to produce disulfide bonds. Acts by oxidizing directly PDI isomerase through a direct disulfide exchange. Does not act as a direct oxidant of folding substrate, but relies on PDI to transfer oxidizing equivalent. Does not oxidize all PDI related proteins, suggesting that it can discriminate between PDI and related proteins. Its reoxidation probably involves electron transfer to molecular oxygen via FAD. Acts independently of glutathione. May be responsible for a significant proportion of reactive oxygen species (ROS) in the cell, thereby being a source of oxidative stress. In Arabidopsis thaliana (Mouse-ear cress), this protein is Endoplasmic reticulum oxidoreductin-2 (AERO2).